The primary structure comprises 69 residues: uncharacterized protein (69 aa).

This is an uncharacterized protein from Treponema pallidum (strain Nichols).